A 488-amino-acid polypeptide reads, in one-letter code: Protein nucleotidyltransferase YdiU (488 aa).

Positions 91, 93, 94, 114, 126, 127, 177, and 184 each coordinate ATP. D253 serves as the catalytic Proton acceptor. Mg(2+)-binding residues include N254 and D263. D263 serves as a coordination point for ATP.

It belongs to the SELO family. Mg(2+) is required as a cofactor. Mn(2+) serves as cofactor.

It catalyses the reaction L-seryl-[protein] + ATP = 3-O-(5'-adenylyl)-L-seryl-[protein] + diphosphate. The catalysed reaction is L-threonyl-[protein] + ATP = 3-O-(5'-adenylyl)-L-threonyl-[protein] + diphosphate. It carries out the reaction L-tyrosyl-[protein] + ATP = O-(5'-adenylyl)-L-tyrosyl-[protein] + diphosphate. The enzyme catalyses L-histidyl-[protein] + UTP = N(tele)-(5'-uridylyl)-L-histidyl-[protein] + diphosphate. It catalyses the reaction L-seryl-[protein] + UTP = O-(5'-uridylyl)-L-seryl-[protein] + diphosphate. The catalysed reaction is L-tyrosyl-[protein] + UTP = O-(5'-uridylyl)-L-tyrosyl-[protein] + diphosphate. Its function is as follows. Nucleotidyltransferase involved in the post-translational modification of proteins. It can catalyze the addition of adenosine monophosphate (AMP) or uridine monophosphate (UMP) to a protein, resulting in modifications known as AMPylation and UMPylation. This Bacillus cereus (strain ATCC 14579 / DSM 31 / CCUG 7414 / JCM 2152 / NBRC 15305 / NCIMB 9373 / NCTC 2599 / NRRL B-3711) protein is Protein nucleotidyltransferase YdiU.